A 293-amino-acid polypeptide reads, in one-letter code: Nucleotide-binding protein HRM2_27900 (293 aa).

11–18 contacts ATP; sequence GLSGSGKS. Position 62–65 (62–65) interacts with GTP; that stretch reads DIRA.

The protein belongs to the RapZ-like family.

Its function is as follows. Displays ATPase and GTPase activities. This chain is Nucleotide-binding protein HRM2_27900, found in Desulforapulum autotrophicum (strain ATCC 43914 / DSM 3382 / VKM B-1955 / HRM2) (Desulfobacterium autotrophicum).